Consider the following 364-residue polypeptide: Nucleosome assembly protein 1;2 (364 aa).

A coiled-coil region spans residues V32–E86. The Nuclear export signal motif lies at L53–Q68. The Nuclear localization signal motif lies at K227–K232. Disordered regions lie at residues F250–T269 and G301–Q364. Acidic residues-rich tracts occupy residues P259 to T269 and A304 to D340. A Cysteine methyl ester modification is found at C361. The S-farnesyl cysteine moiety is linked to residue C361. The propeptide at K362 to Q364 is removed in mature form.

This sequence belongs to the nucleosome assembly protein (NAP) family. As to quaternary structure, binds preferentially histone H1 in vitro. Highly expressed in tissues exhibiting active cell-division activities, such as root and shoot meristems and young flowers.

It is found in the nucleus. The protein resides in the cytoplasm. May modulate chromatin structure by regulation of nucleosome assembly/disassembly. This Oryza sativa subsp. indica (Rice) protein is Nucleosome assembly protein 1;2 (NAP1;2).